The chain runs to 357 residues: DnaJ homolog subfamily C member 25 (357 aa).

Residues 19-39 (WLLLAPLLLVPLLVRPAEALV) traverse the membrane as a helical segment. The J domain occupies 48 to 121 (DCYEVLGVSR…ETRKDYDYML (74 aa)). 2 helical membrane-spanning segments follow: residues 147–167 (VVILVSVCAISVFQYFSWWNS) and 241–261 (LLLFQVLLAPVHLCSYIAWYC).

This sequence belongs to the DNAJC25 family.

The protein resides in the membrane. The protein is DnaJ homolog subfamily C member 25 (Dnajc25) of Rattus norvegicus (Rat).